The primary structure comprises 203 residues: Small ribosomal subunit protein uS4c (203 aa).

Residues 17-39 are disordered; the sequence is TLPGLTTKKSNKLNRPGKDGNTD. One can recognise an S4 RNA-binding domain in the interval 92 to 164; that stretch reads MRLDTLCFTL…IKNNQVREIP (73 aa).

Belongs to the universal ribosomal protein uS4 family. Part of the 30S ribosomal subunit. Contacts protein S5. The interaction surface between S4 and S5 is involved in control of translational fidelity.

The protein localises to the plastid. It is found in the chloroplast. One of the primary rRNA binding proteins, it binds directly to 16S rRNA where it nucleates assembly of the body of the 30S subunit. In terms of biological role, with S5 and S12 plays an important role in translational accuracy. This is Small ribosomal subunit protein uS4c (rps4) from Phaeodactylum tricornutum (strain CCAP 1055/1).